The chain runs to 318 residues: Methionyl-tRNA formyltransferase (318 aa).

110–113 (SLLP) lines the (6S)-5,6,7,8-tetrahydrofolate pocket.

Belongs to the Fmt family.

The enzyme catalyses L-methionyl-tRNA(fMet) + (6R)-10-formyltetrahydrofolate = N-formyl-L-methionyl-tRNA(fMet) + (6S)-5,6,7,8-tetrahydrofolate + H(+). Functionally, attaches a formyl group to the free amino group of methionyl-tRNA(fMet). The formyl group appears to play a dual role in the initiator identity of N-formylmethionyl-tRNA by promoting its recognition by IF2 and preventing the misappropriation of this tRNA by the elongation apparatus. This chain is Methionyl-tRNA formyltransferase, found in Geobacillus sp. (strain WCH70).